We begin with the raw amino-acid sequence, 151 residues long: Neuroglobin (151 aa).

One can recognise a Globin domain in the interval 1-149; the sequence is MERPEPELIR…VVQAMSRGWD (149 aa). Heme b-binding residues include His-64 and His-96.

Belongs to the globin family. Monomer. Homodimer and homotetramer; disulfide-linked. Mainly monomeric but also detected as part of homodimers and homotetramers. Interacts with 14-3-3 proteins; regulates the phosphorylation of NGB. Could interact (ferrous form) with G-alpha(i) proteins (GTP-bound form). Post-translationally, phosphorylated during hypoxia by ERK1/ERK2. Phosphorylation regulates the heme pocket hexacoordination preventing the association of His-64 with the heme metal center. Thereby, promotes the access of dioxygen and nitrite to the heme and stimulates the nitrite reductase activity. Phosphorylation during hypoxia is stabilized by 14-3-3 proteins.

Its subcellular location is the cytoplasm. The protein resides in the cytosol. It is found in the mitochondrion matrix. The enzyme catalyses Fe(III)-heme b-[protein] + nitric oxide + H2O = Fe(II)-heme b-[protein] + nitrite + 2 H(+). Its function is as follows. Monomeric globin with a bis-histidyl six-coordinate heme-iron atom through which it can bind dioxygen, carbon monoxide and nitric oxide. Could help transport oxygen and increase its availability to the metabolically active neuronal tissues, though its low quantity in tissues as well as its high affinity for dioxygen, which may limit its oxygen-releasing ability, argue against it. The ferrous/deoxygenated form exhibits a nitrite reductase activity and it could produce nitric oxide which in turn inhibits cellular respiration in response to hypoxia. In its ferrous/deoxygenated state, it may also exhibit GDI (Guanine nucleotide Dissociation Inhibitor) activity toward heterotrimeric G-alpha proteins, thereby regulating signal transduction to facilitate neuroprotective responses in the wake of hypoxia and associated oxidative stress. In Macaca mulatta (Rhesus macaque), this protein is Neuroglobin.